A 470-amino-acid polypeptide reads, in one-letter code: Uronate isomerase (470 aa).

The protein belongs to the metallo-dependent hydrolases superfamily. Uronate isomerase family.

The enzyme catalyses D-glucuronate = D-fructuronate. It carries out the reaction aldehydo-D-galacturonate = keto-D-tagaturonate. Its pathway is carbohydrate metabolism; pentose and glucuronate interconversion. The chain is Uronate isomerase from Salmonella agona (strain SL483).